The primary structure comprises 91 residues: UPF0213 protein NMA2126 (91 aa).

Residues 4-83 enclose the GIY-YIG domain; the sequence is SNWSLYLILC…AAQKRKLWEQ (80 aa).

Belongs to the UPF0213 family.

The sequence is that of UPF0213 protein NMA2126 from Neisseria meningitidis serogroup A / serotype 4A (strain DSM 15465 / Z2491).